A 473-amino-acid polypeptide reads, in one-letter code: Putative sulfoquinovose importer (473 aa).

Transmembrane regions (helical) follow at residues 18-38, 45-65, 88-108, 110-130, 160-180, 187-207, 239-259, 276-296, 317-337, 380-400, and 415-435; these read AYGVGDFGSNLMLCIGTLYLL, LGMPAYYGGIIFLVAKFFTAF, PFILYASFPVALVATAQFFAT, FTLPVKTAFATVLFMLFGLFY, GGATIGLLLCTVGFMPIQALF, GYLIAAVIFSVCGLFSMWWCF, LLVLCVANLCTLAAFNIKLAI, WMGFFSMGCILIGVLLVPAAV, ILNFIWGGTSFLFVIFSCIAF, ISAALAGFLPGIMLTQIGYIP, and LIFLWPCGLAIIAALTMGFFY.

This sequence belongs to the sodium:galactoside symporter (TC 2.A.2) family.

Its subcellular location is the cell inner membrane. In terms of biological role, could be involved in sulfoquinovose import. In Salmonella typhimurium (strain LT2 / SGSC1412 / ATCC 700720), this protein is Putative sulfoquinovose importer (yihO).